Consider the following 111-residue polypeptide: Large ribosomal subunit protein uL22 (111 aa).

It belongs to the universal ribosomal protein uL22 family. Part of the 50S ribosomal subunit.

In terms of biological role, this protein binds specifically to 23S rRNA; its binding is stimulated by other ribosomal proteins, e.g. L4, L17, and L20. It is important during the early stages of 50S assembly. It makes multiple contacts with different domains of the 23S rRNA in the assembled 50S subunit and ribosome. Its function is as follows. The globular domain of the protein is located near the polypeptide exit tunnel on the outside of the subunit, while an extended beta-hairpin is found that lines the wall of the exit tunnel in the center of the 70S ribosome. The sequence is that of Large ribosomal subunit protein uL22 from Fusobacterium nucleatum subsp. nucleatum (strain ATCC 25586 / DSM 15643 / BCRC 10681 / CIP 101130 / JCM 8532 / KCTC 2640 / LMG 13131 / VPI 4355).